An 89-amino-acid polypeptide reads, in one-letter code: NAD(P)H-quinone oxidoreductase subunit L (89 aa).

The next 2 helical transmembrane spans lie at 29–46 and 59–79; these read VLGG…FYWM and LFIY…APFL.

Belongs to the complex I NdhL subunit family. NDH-1 can be composed of about 15 different subunits; different subcomplexes with different compositions have been identified which probably have different functions.

Its subcellular location is the cellular thylakoid membrane. It catalyses the reaction a plastoquinone + NADH + (n+1) H(+)(in) = a plastoquinol + NAD(+) + n H(+)(out). It carries out the reaction a plastoquinone + NADPH + (n+1) H(+)(in) = a plastoquinol + NADP(+) + n H(+)(out). NDH-1 shuttles electrons from an unknown electron donor, via FMN and iron-sulfur (Fe-S) centers, to quinones in the respiratory and/or the photosynthetic chain. The immediate electron acceptor for the enzyme in this species is believed to be plastoquinone. Couples the redox reaction to proton translocation, and thus conserves the redox energy in a proton gradient. Cyanobacterial NDH-1 also plays a role in inorganic carbon-concentration. This is NAD(P)H-quinone oxidoreductase subunit L from Prochlorococcus marinus (strain NATL1A).